We begin with the raw amino-acid sequence, 245 residues long: 1-(5-phosphoribosyl)-5-[(5-phosphoribosylamino)methylideneamino] imidazole-4-carboxamide isomerase (245 aa).

Asp8 acts as the Proton acceptor in catalysis. Asp129 functions as the Proton donor in the catalytic mechanism.

This sequence belongs to the HisA/HisF family.

Its subcellular location is the cytoplasm. It carries out the reaction 1-(5-phospho-beta-D-ribosyl)-5-[(5-phospho-beta-D-ribosylamino)methylideneamino]imidazole-4-carboxamide = 5-[(5-phospho-1-deoxy-D-ribulos-1-ylimino)methylamino]-1-(5-phospho-beta-D-ribosyl)imidazole-4-carboxamide. The protein operates within amino-acid biosynthesis; L-histidine biosynthesis; L-histidine from 5-phospho-alpha-D-ribose 1-diphosphate: step 4/9. The chain is 1-(5-phosphoribosyl)-5-[(5-phosphoribosylamino)methylideneamino] imidazole-4-carboxamide isomerase from Rhodopseudomonas palustris (strain BisA53).